We begin with the raw amino-acid sequence, 623 residues long: Glutathione import ATP-binding protein GsiA (623 aa).

ABC transporter domains follow at residues 15-269 (VENL…RALL) and 314-564 (LRVR…RKLL). Residues 49-56 (GESGSGKS) and 357-364 (GESGSGKS) contribute to the ATP site.

Belongs to the ABC transporter superfamily. Glutathione importer (TC 3.A.1.5.11) family. In terms of assembly, the complex is composed of two ATP-binding proteins (GsiA), two transmembrane proteins (GsiC and GsiD) and a solute-binding protein (GsiB).

It localises to the cell inner membrane. It carries out the reaction glutathione(out) + ATP + H2O = glutathione(in) + ADP + phosphate + H(+). Part of the ABC transporter complex GsiABCD involved in glutathione import. Responsible for energy coupling to the transport system. The polypeptide is Glutathione import ATP-binding protein GsiA (Shigella flexneri).